A 286-amino-acid chain; its full sequence is Protein N-terminal amidase (286 aa).

Positions 1–286 (MKFGCVQFFP…NGIVVGELEK (286 aa)) constitute a CN hydrolase domain. Glu43 acts as the Proton acceptor in catalysis. Lys121 serves as the catalytic Proton donor. Residue Cys155 is the Nucleophile of the active site.

Belongs to the carbon-nitrogen hydrolase superfamily.

It is found in the cytoplasm. The protein resides in the nucleus. Deamidates N-terminal Asn and Gln. Component of a targeting complex in the N-end rule pathway. The chain is Protein N-terminal amidase (nta1) from Schizosaccharomyces pombe (strain 972 / ATCC 24843) (Fission yeast).